The chain runs to 177 residues: Ribosome rescue factor SmrB (177 aa).

The interval 22 to 45 (SKKLRQDTIIHQPSKNFSEQQKQR) is disordered. The span at 30-41 (IIHQPSKNFSEQ) shows a compositional bias: polar residues. In terms of domain architecture, Smr spans 98–173 (LDMHGMKQDE…GAGAILVLLS (76 aa)).

It belongs to the SmrB family. In terms of assembly, associates with collided ribosomes, but not with correctly translating polysomes.

Its function is as follows. Acts as a ribosome collision sensor. Detects stalled/collided disomes (pairs of ribosomes where the leading ribosome is stalled and a second ribosome has collided with it) and endonucleolytically cleaves mRNA at the 5' boundary of the stalled ribosome. Stalled/collided disomes form a new interface (primarily via the 30S subunits) that binds SmrB. Cleaved mRNA becomes available for tmRNA ligation, leading to ribosomal subunit dissociation and rescue of stalled ribosomes. In Aliivibrio salmonicida (strain LFI1238) (Vibrio salmonicida (strain LFI1238)), this protein is Ribosome rescue factor SmrB.